The chain runs to 159 residues: Protein C2 (159 aa).

A Nuclear localization signal motif is present at residues 43–60; the sequence is KKRPPKLTWAPKKKRRKA. A zinc finger spans residues 65–81; that stretch reads CGCSYYGGIDCEDGFTH. The interval 102–139 is disordered; the sequence is PNLLPPPEHNNNGDGEQNNNITNQSQPQPAESVGSPDL. Residues 110 to 124 show a composition bias toward low complexity; sequence HNNNGDGEQNNNITN.

Belongs to the geminiviridae transcriptional activator protein family. Monomer. Suppress local silencing by interacting with and inactivating host adenosine kinase 2 (ADK2) in the cytoplasm. Interacts with and inhibits host SNF1 kinase.

The protein localises to the host cytoplasm. Acts as a suppressor of RNA-mediated gene silencing, also known as post-transcriptional gene silencing (PTGS), a mechanism of plant viral defense that limits the accumulation of viral RNAs. Suppresses the host RNA silencing by inhibiting adenosine kinase 2 (ADK2), a kinase involved in a general methylation pathway. Also suppresses the host basal defense by interacting with and inhibiting SNF1 kinase, a key regulator of cell metabolism implicated in innate antiviral defense. Determines pathogenicity. This chain is Protein C2, found in Tomato pseudo-curly top virus (TPCTV).